The sequence spans 63 residues: Venom peptide 2a (63 aa).

The first 22 residues, 1–22, serve as a signal peptide directing secretion; it reads MRGTSFILFAVVVILGFLNANA. 5 AXPX repeats span residues 22-25, 26-29, 32-35, 38-41, and 44-47; these read AEPL, ANPA, ANPD, and ANPE. The propeptide occupies 23-48; that stretch reads EPLANPAPLANPDPLANPDPLANPEA. At Leu62 the chain carries Leucine amide.

In terms of tissue distribution, expressed by the venom gland.

It is found in the secreted. It localises to the target cell membrane. Its function is as follows. Antimicrobial peptide. Shows activities against Gram-positive bacteria (S.aureus MIC=50 uM and 200 ug/ml, and B.subtilis MIC=200 ug/ml), Gram-negative bacterium E.coli (MIC=100 uM and 200 ug/ml) and fungi (B.cinerea MIC=5 uM, S.cerevisiae MIC=128 ug/ml, S.pombe MIC=128 ug/ml, A.nidulans MIC=128 ug/ml, and C.albicans MIC=64-100 uM). Shows cytolytic activity against insect cell lines. Its hemolytic activity is controversial, as Baek and colleagues report no activity while Bea and colleagues note a hemolytic activity. In vivo, peptide injection in the vicinity of the head and thorax of lepidopteran larvae induces feeding disorder followed by death due to starvation. Is weakly lethal when tested on water flies (D.magna), but is not lethal on lady beetles (H.convergens). In Eumenes pomiformis (Potter wasp), this protein is Venom peptide 2a.